Reading from the N-terminus, the 179-residue chain is Large ribosomal subunit protein uL5 (179 aa).

The protein belongs to the universal ribosomal protein uL5 family. Part of the 50S ribosomal subunit; part of the 5S rRNA/L5/L18/L25 subcomplex. Contacts the 5S rRNA and the P site tRNA. Forms a bridge to the 30S subunit in the 70S ribosome.

Its function is as follows. This is one of the proteins that bind and probably mediate the attachment of the 5S RNA into the large ribosomal subunit, where it forms part of the central protuberance. In the 70S ribosome it contacts protein S13 of the 30S subunit (bridge B1b), connecting the 2 subunits; this bridge is implicated in subunit movement. Contacts the P site tRNA; the 5S rRNA and some of its associated proteins might help stabilize positioning of ribosome-bound tRNAs. In Carboxydothermus hydrogenoformans (strain ATCC BAA-161 / DSM 6008 / Z-2901), this protein is Large ribosomal subunit protein uL5.